The primary structure comprises 438 residues: MGNNVVVLGTQWGDEGKGKIVDLLTEDAKYVVRYQGGHNAGHTLVIDGEKTVLHLIPSGILRDNVECIIGNGVVLSPDALLKEMAPLEARGIPVRERLFISEACPLILPYHVALDQAREIARGNKAIGTTGRGIGPAYEDKVSRRGLRVGDLFDKVAFAEKLKEVMEFHNFALVNYYKVEPVSYEEVLEQAMSYADLLTSMVIDVTDTLDAARKRGDKIMFEGAQGTLLDIDHGTYPYVTSSNTTAGGVAAGSGFGPRHLGYILGITKAYCTRVGSGPFPTELYDGLEKQDPIGKHLGTVGHEFGATTGRLRRTGWFDAVAMRRAIQINSLSGMCLTKLDVLDGLEELKICTGYQMKDGSLLEVSPMAAEAFEEATPVYETMPGWSENTFGAKTLEELPQAALNYIKRIEDLTGVPIDIISTGPDRNETIIKVHPFQA.

Residues 13 to 19 (GDEGKGK) and 41 to 43 (GHT) each bind GTP. Aspartate 14 serves as the catalytic Proton acceptor. Mg(2+)-binding residues include aspartate 14 and glycine 41. IMP contacts are provided by residues 14 to 17 (DEGK), 39 to 42 (NAGH), threonine 130, arginine 144, glutamine 225, threonine 240, and arginine 310. Histidine 42 acts as the Proton donor in catalysis. 306-312 (ATTGRLR) lines the substrate pocket. GTP is bound by residues arginine 312, 338-340 (KLD), and 421-423 (STG).

The protein belongs to the adenylosuccinate synthetase family. In terms of assembly, homodimer. It depends on Mg(2+) as a cofactor.

It is found in the cytoplasm. The catalysed reaction is IMP + L-aspartate + GTP = N(6)-(1,2-dicarboxyethyl)-AMP + GDP + phosphate + 2 H(+). It functions in the pathway purine metabolism; AMP biosynthesis via de novo pathway; AMP from IMP: step 1/2. Its function is as follows. Plays an important role in the de novo pathway of purine nucleotide biosynthesis. Catalyzes the first committed step in the biosynthesis of AMP from IMP. This is Adenylosuccinate synthetase from Aliivibrio fischeri (strain ATCC 700601 / ES114) (Vibrio fischeri).